Reading from the N-terminus, the 320-residue chain is Beta-ketoacyl-[acyl-carrier-protein] synthase III (320 aa).

Residues Cys-114 and His-247 contribute to the active site. The tract at residues 248-252 (QANRR) is ACP-binding. Residue Asn-277 is part of the active site.

The protein belongs to the thiolase-like superfamily. FabH family. As to quaternary structure, homodimer.

The protein resides in the cytoplasm. It catalyses the reaction malonyl-[ACP] + acetyl-CoA + H(+) = 3-oxobutanoyl-[ACP] + CO2 + CoA. It participates in lipid metabolism; fatty acid biosynthesis. In terms of biological role, catalyzes the condensation reaction of fatty acid synthesis by the addition to an acyl acceptor of two carbons from malonyl-ACP. Catalyzes the first condensation reaction which initiates fatty acid synthesis and may therefore play a role in governing the total rate of fatty acid production. Possesses both acetoacetyl-ACP synthase and acetyl transacylase activities. Its substrate specificity determines the biosynthesis of branched-chain and/or straight-chain of fatty acids. The sequence is that of Beta-ketoacyl-[acyl-carrier-protein] synthase III from Neisseria meningitidis serogroup B (strain ATCC BAA-335 / MC58).